Here is a 776-residue protein sequence, read N- to C-terminus: Meiotic expression up-regulated protein 1/2 (776 aa).

5 coiled-coil regions span residues 87 to 122, 173 to 227, 265 to 307, 362 to 430, and 496 to 595; these read YVLK…AQEE, FSEL…DLKE, YKVE…NDEE, KMSQ…RNNS, and INNQ…NTEL.

This is Meiotic expression up-regulated protein 1/2 (meu1) from Schizosaccharomyces pombe (strain 972 / ATCC 24843) (Fission yeast).